The chain runs to 190 residues: Dynein axonemal light chain 1 (190 aa).

Residue Ala-2 is modified to N-acetylalanine. LRR repeat units follow at residues 49-70, 71-92, 94-115, and 116-137; these read NCEKLSLSTNCIEKIANLNGLK, NLRILSLGRNNIKNLNGLEAVG, TLEELWISYNFIEKLKGIHVMK, and KLKILYMSNNLVKDWAEFLKLA. Ser-56 bears the Phosphoserine mark. Residues 150 to 190 form the LRRCT domain; sequence NPLEEKHSAEGNWIDEATKRVPKLKKLDGTPVIKEDEEEES.

The protein belongs to the dynein light chain LC1-type family. In terms of assembly, interacts with ZMYND10 (via C-terminus). Interacts with DNAH5, a outer arm dynein heavy chain. Interacts with tubulin located within the A-tubule of the outer doublets in a ATP-independent manner. Expressed in the respiratory epithelium of the upper airways and the ependymal cells lining the brain ventricles.

The protein resides in the cytoplasm. It is found in the cytoskeleton. It localises to the cilium axoneme. Part of the multisubunit axonemal ATPase complexes that generate the force for cilia motility and govern beat frequency. Component of the outer arm dynein (ODA). May be involved in a mechanosensory feedback mechanism controlling ODA activity based on external conformational cues by tethering the outer arm dynein heavy chain (DNAH5) to the microtubule within the axoneme. Important for ciliary function in the airways and for the function of the cilia that produce the nodal flow essential for the determination of the left-right asymmetry. This chain is Dynein axonemal light chain 1 (Dnal1), found in Mus musculus (Mouse).